The primary structure comprises 485 residues: ATP-dependent 6-phosphofructokinase 7 (485 aa).

ATP-binding positions include Gly101, 164 to 165 (RG), and 189 to 192 (GDGT). Residue Asp190 coordinates Mg(2+). Substrate is bound by residues 218 to 220 (TID), 263 to 265 (MGR), Glu319, and 374 to 377 (YMIR). The active-site Proton acceptor is Asp220. A disordered region spans residues 449 to 485 (SFLGPKDTSEEKKELPETPLLDDGAVDIPPVTKEVTK). Residues 455–464 (DTSEEKKELP) are compositionally biased toward basic and acidic residues.

This sequence belongs to the phosphofructokinase type A (PFKA) family. PPi-dependent PFK group II subfamily. Atypical ATP-dependent clade 'X' sub-subfamily. As to quaternary structure, homotetramer. Requires Mg(2+) as cofactor. Expressed in roots, leaves, stems and flowers.

It is found in the cytoplasm. It carries out the reaction beta-D-fructose 6-phosphate + ATP = beta-D-fructose 1,6-bisphosphate + ADP + H(+). Its pathway is carbohydrate degradation; glycolysis; D-glyceraldehyde 3-phosphate and glycerone phosphate from D-glucose: step 3/4. With respect to regulation, allosterically activated by AMP. In terms of biological role, catalyzes the phosphorylation of D-fructose 6-phosphate to fructose 1,6-bisphosphate by ATP, the first committing step of glycolysis. This Arabidopsis thaliana (Mouse-ear cress) protein is ATP-dependent 6-phosphofructokinase 7.